The primary structure comprises 63 residues: Large ribosomal subunit protein uL29 (63 aa).

It belongs to the universal ribosomal protein uL29 family.

The polypeptide is Large ribosomal subunit protein uL29 (Haemophilus ducreyi (strain 35000HP / ATCC 700724)).